The following is a 315-amino-acid chain: Small ribosomal subunit biogenesis GTPase RsgA (315 aa).

In terms of domain architecture, CP-type G spans 80 to 241; it reads LSKQTHIIAS…IIDTPGIKGF (162 aa). Residues 129 to 132 and 183 to 191 each bind GTP; these read NKVD and GHSGTGKST. The Zn(2+) site is built by Cys-265, Cys-270, His-272, and Cys-278.

The protein belongs to the TRAFAC class YlqF/YawG GTPase family. RsgA subfamily. In terms of assembly, monomer. Associates with 30S ribosomal subunit, binds 16S rRNA. It depends on Zn(2+) as a cofactor.

The protein localises to the cytoplasm. In terms of biological role, one of several proteins that assist in the late maturation steps of the functional core of the 30S ribosomal subunit. Helps release RbfA from mature subunits. May play a role in the assembly of ribosomal proteins into the subunit. Circularly permuted GTPase that catalyzes slow GTP hydrolysis, GTPase activity is stimulated by the 30S ribosomal subunit. This chain is Small ribosomal subunit biogenesis GTPase RsgA, found in Christiangramia forsetii (strain DSM 17595 / CGMCC 1.15422 / KT0803) (Gramella forsetii).